The following is a 672-amino-acid chain: UvrABC system protein B (672 aa).

The 156-residue stretch at 26 to 181 (AGLEDGLAYQ…ILQRLAELQY (156 aa)) folds into the Helicase ATP-binding domain. 39–46 (GVTGSGKT) provides a ligand contact to ATP. The Beta-hairpin motif lies at 92 to 115 (YYDYYQPEAYVPSSDTYIEKDASI). A Helicase C-terminal domain is found at 430–592 (QVDDLLSEIK…ITPKSIQKAV (163 aa)). The 36-residue stretch at 631–666 (AKELRKLEEQMYHHARNLEFEEAAAVRDKIQHIRKG) folds into the UVR domain.

The protein belongs to the UvrB family. Forms a heterotetramer with UvrA during the search for lesions. Interacts with UvrC in an incision complex.

The protein localises to the cytoplasm. Functionally, the UvrABC repair system catalyzes the recognition and processing of DNA lesions. A damage recognition complex composed of 2 UvrA and 2 UvrB subunits scans DNA for abnormalities. Upon binding of the UvrA(2)B(2) complex to a putative damaged site, the DNA wraps around one UvrB monomer. DNA wrap is dependent on ATP binding by UvrB and probably causes local melting of the DNA helix, facilitating insertion of UvrB beta-hairpin between the DNA strands. Then UvrB probes one DNA strand for the presence of a lesion. If a lesion is found the UvrA subunits dissociate and the UvrB-DNA preincision complex is formed. This complex is subsequently bound by UvrC and the second UvrB is released. If no lesion is found, the DNA wraps around the other UvrB subunit that will check the other stand for damage. This is UvrABC system protein B from Coxiella burnetii (strain CbuK_Q154) (Coxiella burnetii (strain Q154)).